The sequence spans 1338 residues: Centrosomal P4.1-associated protein (1338 aa).

The tract at residues 190 to 211 is disordered; sequence GLSLLPDDQSQKHRSPGNTTTG. Residues Ser-260 and Ser-316 each carry the phosphoserine modification. Positions 319–394 are alpha/beta-tubulin binding; sequence VANIEERPIK…FTNAKSKFQK (76 aa). Disordered regions lie at residues 386-414, 436-479, and 521-551; these read TNAKSKFQKGKESKLVTNQSTSEDQPLFK, PILK…QTGK, and QGKDRLPLSTGPASRLAAKSPIRETMKESES. Residues 400-409 are compositionally biased toward polar residues; that stretch reads LVTNQSTSED. A Phosphoserine modification is found at Ser-540. A compositionally biased stretch (basic and acidic residues) spans 541–550; it reads PIRETMKESE. Ser-589 bears the Phosphoserine; by PLK2 mark. Ser-595 is modified (phosphoserine; by PLK2 and PLK4). 3 disordered regions span residues 611–789, 845–865, and 1096–1153; these read HRMS…LSLS, VKRGEDLSKSRRSRSPPTSEL, and YLPM…QGEI. The span at 635-650 shows a compositional bias: basic and acidic residues; it reads NRSEDLDHTAREKESE. Positions 679 to 689 are enriched in polar residues; it reads QKSTSENQTEW. Positions 717 to 764 are enriched in basic and acidic residues; the sequence is STEDRERGISSREDSPQVCDDKGPFKDTRTQEDKRRDVDLDLSDKDYS. Position 759 is a phosphoserine (Ser-759). The segment at 895 to 1338 is interaction with STIL; sequence QPPGDNARSQ…EGNVLMDTEL (444 aa). A compositionally biased stretch (acidic residues) spans 1140–1149; the sequence is YKEEEEDQDI.

It belongs to the TCP10 family. Forms homodimers. Associates with microtubules plus ends; binds to beta-tubulin subunits exposed on microtubule outer surface at its distal tip; also associates with microtubule lattice. Associated with the gamma-tubulin complex. Interacts with the head domain of EPB41. Interacts with LYST. Interacts with CEP152 (via C-terminus). Interacts with STIL. Forms a complex with STIL and SASS6. Phosphorylation at Ser-589 and Ser-595 by PLK2 is required for procentriole formation and centriole elongation. Phosphorylation by PLK2 oscillates during the cell cycle: it increases at G1/S transition and decreases during the exit from mitosis. Phosphorylation at Ser-595 is also mediated by PLK4 but is not a critical step in PLK4 function in procentriole assembly.

Its subcellular location is the cytoplasm. The protein localises to the cytoskeleton. It is found in the microtubule organizing center. It localises to the centrosome. The protein resides in the centriole. Plays an important role in cell division and centrosome function by participating in centriole duplication. Inhibits microtubule nucleation from the centrosome. Involved in the regulation of slow processive growth of centriolar microtubules. Acts as a microtubule plus-end tracking protein that stabilizes centriolar microtubules and inhibits microtubule polymerization and extension from the distal ends of centrioles. Required for centriole elongation and for STIL-mediated centriole amplification. Required for the recruitment of CEP295 to the proximal end of new-born centrioles at the centriolar microtubule wall during early S phase in a PLK4-dependent manner. May be involved in the control of centriolar-microtubule growth by acting as a regulator of tubulin release. The sequence is that of Centrosomal P4.1-associated protein from Homo sapiens (Human).